Reading from the N-terminus, the 430-residue chain is UDP-N-acetylglucosamine 1-carboxyvinyltransferase (430 aa).

22-23 (KN) contacts phosphoenolpyruvate. Arginine 102 serves as a coordination point for UDP-N-acetyl-alpha-D-glucosamine. The Proton donor role is filled by cysteine 126. Residue cysteine 126 is modified to 2-(S-cysteinyl)pyruvic acid O-phosphothioketal. Residues 131–135 (RPVDL), 172–175 (KVSV), aspartate 317, and isoleucine 339 contribute to the UDP-N-acetyl-alpha-D-glucosamine site.

It belongs to the EPSP synthase family. MurA subfamily.

Its subcellular location is the cytoplasm. The enzyme catalyses phosphoenolpyruvate + UDP-N-acetyl-alpha-D-glucosamine = UDP-N-acetyl-3-O-(1-carboxyvinyl)-alpha-D-glucosamine + phosphate. The protein operates within cell wall biogenesis; peptidoglycan biosynthesis. Its function is as follows. Cell wall formation. Adds enolpyruvyl to UDP-N-acetylglucosamine. The protein is UDP-N-acetylglucosamine 1-carboxyvinyltransferase of Rhizobium leguminosarum bv. trifolii (strain WSM2304).